The following is a 480-amino-acid chain: Glutamate--tRNA ligase (480 aa).

A 'HIGH' region motif is present at residues 21-31; that stretch reads PSPTGYLHVGG. Zn(2+)-binding residues include Cys110, Cys112, Cys137, and His139. The 'KMSKS' region motif lies at 248–252; sequence KLSKR. Position 251 (Lys251) interacts with ATP.

This sequence belongs to the class-I aminoacyl-tRNA synthetase family. Glutamate--tRNA ligase type 1 subfamily. In terms of assembly, monomer. It depends on Zn(2+) as a cofactor.

It localises to the cytoplasm. The catalysed reaction is tRNA(Glu) + L-glutamate + ATP = L-glutamyl-tRNA(Glu) + AMP + diphosphate. In terms of biological role, catalyzes the attachment of glutamate to tRNA(Glu) in a two-step reaction: glutamate is first activated by ATP to form Glu-AMP and then transferred to the acceptor end of tRNA(Glu). This is Glutamate--tRNA ligase from Haemophilus influenzae (strain PittEE).